We begin with the raw amino-acid sequence, 139 residues long: Large ribosomal subunit protein uL22c (139 aa).

Belongs to the universal ribosomal protein uL22 family. As to quaternary structure, part of the 50S ribosomal subunit.

It is found in the plastid. It localises to the chloroplast. Functionally, this protein binds specifically to 23S rRNA. In terms of biological role, the globular domain of the protein is located near the polypeptide exit tunnel on the outside of the subunit, while an extended beta-hairpin is found that lines the wall of the exit tunnel in the center of the 70S ribosome. This chain is Large ribosomal subunit protein uL22c (rpl22), found in Cycas taitungensis (Prince sago).